Reading from the N-terminus, the 1050-residue chain is Ankyrin repeat domain-containing protein 27 (1050 aa).

The interval 1–372 (MALYDEDLLK…RQGSLSAKPP (372 aa)) is sufficient for GEF activity towards RAB21. One can recognise a VPS9 domain in the interval 233–371 (ASEDAAFNKI…IRQGSLSAKP (139 aa)). ANK repeat units follow at residues 396 to 426 (SPTD…DKDA), 462 to 491 (RGHT…VVNA), 495 to 524 (HGAT…SAEV), 528 to 560 (NGNT…RLDI), 564 to 593 (KGDT…SPEI), and 597 to 627 (LKET…RQKS). Positions 396-460 (SPTDCLFKHI…PSVVTPFSRD (65 aa)) are sufficient for interaction with VPS29. The segment at 451 to 600 (PSVVTPFSRD…PEIQNRLKET (150 aa)) is interaction with RAB38. The segment at 451–730 (PSVVTPFSRD…APAQKRLAKV (280 aa)) is interaction with RAB32. Residues 630–665 (APVQSLQRSVDSISQESSTSSFSSMSAGSRQEETKK) are disordered. The segment covering 638–658 (SVDSISQESSTSSFSSMSAGS) has biased composition (low complexity). Residues 658–707 (SRQEETKKDYREVEKLLRAVADGDLEMVRYLLEWTEEDLEDAEDTVSAVD) are required for interaction with VAMP7. 5 ANK repeats span residues 668 to 698 (REVE…DLED), 743 to 772 (DGSS…NAGA), 776 to 805 (DQAV…KPNK), 809 to 838 (SGNT…AINT), and 842 to 871 (KGNT…SVQV). The tract at residues 692–746 (TEEDLEDAEDTVSAVDPEFCHPLCQCPKCAPAQKRLAKVPASGLGVNVTSQDGSS) is sufficient for interaction with VPS29. A phosphoserine mark is found at serine 962 and serine 970. Residues 987–1050 (PAQSGSHAAE…TPQEVSASRS (64 aa)) are disordered. Positions 994–1007 (AAEKGNSDWPERPR) are enriched in basic and acidic residues. Residue threonine 1023 is modified to Phosphothreonine. Positions 1040–1050 (STPQEVSASRS) are enriched in polar residues.

Interacts with RAB21 (GDP-bound form), VPS29, KIF5A, KIF5C, GOLGA4. Interacts with RAB32 (GTP-bound form), RAB38 (GTP-bound form), VAMP7. Interacts with low affinity with RAB5. ANKRD27:RAB32 heterodimers can homodimerize to form tetramers. Can interact with RAB38 or RAB32, VPS29 and VAMP7 simultaneously. A decreased interaction with RAB32 seen in the presence of SGSM2.

It localises to the early endosome. Its subcellular location is the late endosome. The protein resides in the cytoplasmic vesicle membrane. It is found in the lysosome. The protein localises to the cell membrane. It localises to the melanosome. May be a guanine exchange factor (GEF) for Rab21, Rab32 and Rab38 and regulate endosome dynamics. May regulate the participation of VAMP7 in membrane fusion events; in vitro inhibits VAMP7-mediated SNARE complex formation by trapping VAMP7 in a closed, fusogenically inactive conformation. Involved in peripheral melanosomal distribution of TYRP1 in melanocytes; the function, which probably is implicating vesicle-trafficking, includes cooperation with Rab32, Rab38 and VAMP7. Involved in the regulation of neurite growth; the function seems to require its GEF activity, probably towards Rab21, and VAMP7 but not Rab32/38. Proposed to be involved in Golgi sorting of VAMP7 and transport of VAMP7 vesicles to the cell surface; the function seems to implicate kinesin heavy chain isoform 5 proteins, GOLGA4, RAB21 and MACF1. Required for the colocalization of VAMP7 and Rab21, probably on TGN sites. Involved in GLUT1 endosome-to-plasma membrane trafficking; the function is dependent of association with VPS29. Regulates the proper trafficking of melanogenic enzymes TYR, TYRP1 and DCT/TYRP2 to melanosomes in melanocytes. The polypeptide is Ankyrin repeat domain-containing protein 27 (ANKRD27) (Pongo abelii (Sumatran orangutan)).